Reading from the N-terminus, the 161-residue chain is DNA-directed RNA polymerase 18 kDa subunit (161 aa).

Belongs to the poxviridae DNA-directed RNA polymerase 18 kDa subunit family. As to quaternary structure, the DNA-dependent RNA polymerase used for intermediate and late genes expression consists of eight subunits Rpo30/OPG66, Rpo7/OPG90, Rpo22/OPG103, Rpo147/OPG105, Rpo18/OPG119, Rpo19/OPG131, Rpo132/OPG151 and Rpo35/OPG156. The same holoenzyme, with the addition of the transcription-specificity factor OPG109, is used for early gene expression.

It is found in the virion. It catalyses the reaction RNA(n) + a ribonucleoside 5'-triphosphate = RNA(n+1) + diphosphate. Part of the DNA-dependent RNA polymerase which catalyzes the transcription of viral DNA into RNA using the four ribonucleoside triphosphates as substrates. Responsible for the transcription of early, intermediate and late genes. DNA-dependent RNA polymerase associates with the early transcription factor (ETF), itself composed of OPG118 and OPG133, thereby allowing the early genes transcription. Late transcription, and probably also intermediate transcription, require newly synthesized RNA polymerase. The chain is DNA-directed RNA polymerase 18 kDa subunit (OPG119) from Vaccinia virus (strain Copenhagen) (VACV).